Consider the following 418-residue polypeptide: Tyrosine--tRNA ligase (418 aa).

Residue tyrosine 38 coordinates L-tyrosine. The 'HIGH' region signature appears at 43–52 (CTARSLHIGS). Residues tyrosine 175 and glutamine 179 each contribute to the L-tyrosine site. The 'KMSKS' region motif lies at 235–239 (KMGKT). An ATP-binding site is contributed by lysine 238. Residues 348–413 (LSVVKLLQVS…CGKKRHLKVV (66 aa)) form the S4 RNA-binding domain.

This sequence belongs to the class-I aminoacyl-tRNA synthetase family. TyrS type 1 subfamily. Homodimer.

It localises to the cytoplasm. It carries out the reaction tRNA(Tyr) + L-tyrosine + ATP = L-tyrosyl-tRNA(Tyr) + AMP + diphosphate + H(+). Catalyzes the attachment of tyrosine to tRNA(Tyr) in a two-step reaction: tyrosine is first activated by ATP to form Tyr-AMP and then transferred to the acceptor end of tRNA(Tyr). This Ehrlichia ruminantium (strain Welgevonden) protein is Tyrosine--tRNA ligase.